The sequence spans 384 residues: S-adenosylmethionine synthase (384 aa).

ATP is bound at residue histidine 15. Residue aspartate 17 coordinates Mg(2+). Glutamate 43 lines the K(+) pocket. L-methionine contacts are provided by glutamate 56 and glutamine 99. Residues 99 to 109 (QSPDINQGVDR) form a flexible loop region. Residues 164-166 (DAK), 230-231 (RF), aspartate 239, 245-246 (RK), alanine 262, and lysine 266 contribute to the ATP site. Aspartate 239 contributes to the L-methionine binding site. An L-methionine-binding site is contributed by lysine 270.

Belongs to the AdoMet synthase family. In terms of assembly, homotetramer; dimer of dimers. Mg(2+) serves as cofactor. Requires K(+) as cofactor.

It localises to the cytoplasm. It carries out the reaction L-methionine + ATP + H2O = S-adenosyl-L-methionine + phosphate + diphosphate. It participates in amino-acid biosynthesis; S-adenosyl-L-methionine biosynthesis; S-adenosyl-L-methionine from L-methionine: step 1/1. Functionally, catalyzes the formation of S-adenosylmethionine (AdoMet) from methionine and ATP. The overall synthetic reaction is composed of two sequential steps, AdoMet formation and the subsequent tripolyphosphate hydrolysis which occurs prior to release of AdoMet from the enzyme. The polypeptide is S-adenosylmethionine synthase (Klebsiella pneumoniae subsp. pneumoniae (strain ATCC 700721 / MGH 78578)).